The chain runs to 386 residues: GLABROUS1 enhancer-binding protein-like 1 (386 aa).

2 disordered regions span residues 1 to 58 (MVTP…KKKK) and 197 to 314 (ESGE…DDDD). Residues 216 to 226 (EEIRDNDETAR) show a composition bias toward basic and acidic residues. Positions 221-285 (NDETARKAQQ…LKEHEEVANT (65 aa)) form a coiled coil. Over residues 257 to 267 (DNNGTTQIAQQ) the composition is skewed to polar residues. A compositionally biased stretch (low complexity) spans 291 to 300 (NGAAKTTENG). The tract at residues 354-375 (LSDEWKALCVEERRLNIKKLRF) is non-canonical leucine-zipper.

The protein belongs to the GeBP family. In terms of assembly, homo- and heterodimers. Interacts with GEBP, GPL2 and GPL3. Interacts with GEBP. As to expression, expressed in the apical meristem and young leaf primordia. Detected in the vascular tissues of cotyledons and leaves, in hydathodes and at the base of flowers and siliques, but not in roots.

It localises to the nucleus. Functionally, probable transcription factor. May play redundant roles with GEBP and GPL2 in cytokinin responses by regulating the transcript levels of type-A ARR response genes. Involved in stress responses. Plays a repressive role in cell expansion by counteracting the positive role of CPR5 in this process, but does not regulate cell proliferation or endoreduplication. This Arabidopsis thaliana (Mouse-ear cress) protein is GLABROUS1 enhancer-binding protein-like 1.